A 258-amino-acid polypeptide reads, in one-letter code: Acetylglutamate kinase (258 aa).

Substrate-binding positions include 44–45 (GG), arginine 66, and asparagine 158. Residues 181–186 (DVSGIL) and 209–211 (IIT) contribute to the ATP site.

It belongs to the acetylglutamate kinase family. ArgB subfamily. In terms of assembly, homodimer.

The protein localises to the cytoplasm. It carries out the reaction N-acetyl-L-glutamate + ATP = N-acetyl-L-glutamyl 5-phosphate + ADP. The protein operates within amino-acid biosynthesis; L-arginine biosynthesis; N(2)-acetyl-L-ornithine from L-glutamate: step 2/4. Its function is as follows. Catalyzes the ATP-dependent phosphorylation of N-acetyl-L-glutamate. This is Acetylglutamate kinase from Escherichia coli O157:H7.